The sequence spans 164 residues: Heat shock protein beta-6 (164 aa).

The interval 1–72 is involved in stabilization of the HSPB1:HSBP6 heterodimer; it reads MEIPVSVQPS…PTAQVSTDPG (72 aa). S16 bears the Phosphoserine mark. The 108-residue stretch at 56–163 folds into the sHSP domain; that stretch reads RAPSVALPTA…PLQSPPGAAA (108 aa). Residue Q66 is modified to Deamidated glutamine. S157 carries the post-translational modification Phosphoserine.

Belongs to the small heat shock protein (HSP20) family. In terms of assembly, homodimer. Small heat shock proteins form high molecular mass oligomers containing variable number of monomers; these oligomers display a very flexible quaternary structure easily exchanging their subunits. Heterooligomer with HSPB1; formed through oligomerization of HSPB1:HSBP6 dimers; subunit exchange leads to formation of at least two different heterooligomeric complexes, differing in variable quantities of HSPB1 and HSPB6 homodimers in addition to HSPB1:HSPB6 heterodimers. Heterooligomer with CRYAB; large heterooligomers consist of CRYAB homodimers and HSPB5:HSPB6 heterodimers but lacking HSPB6 homodimers. Interacts with BAG3. Interacts (phosphorylated) with YWHAZ. Interacts with PDE4A and PDE4D; required for maintenance of the non-phosphorylated state of HSPB6 under basal conditions. Interacts with KDR. Interacts with PRKD1. Phosphorylated at Ser-16 by PKA and probably PKD1K; required to protect cardiomyocytes from apoptosis.

Its subcellular location is the cytoplasm. The protein localises to the nucleus. It localises to the secreted. In terms of biological role, small heat shock protein which functions as a molecular chaperone probably maintaining denatured proteins in a folding-competent state. Seems to have versatile functions in various biological processes. Plays a role in regulating muscle function such as smooth muscle vasorelaxation and cardiac myocyte contractility. May regulate myocardial angiogenesis implicating KDR. Overexpression mediates cardioprotection and angiogenesis after induced damage. Stabilizes monomeric YWHAZ thereby supporting YWHAZ chaperone-like activity. This chain is Heat shock protein beta-6 (HSPB6), found in Bos taurus (Bovine).